The chain runs to 347 residues: Elongation factor Ts (347 aa).

The interval 80-83 (TDFV) is involved in Mg(2+) ion dislocation from EF-Tu.

Belongs to the EF-Ts family.

It is found in the cytoplasm. In terms of biological role, associates with the EF-Tu.GDP complex and induces the exchange of GDP to GTP. It remains bound to the aminoacyl-tRNA.EF-Tu.GTP complex up to the GTP hydrolysis stage on the ribosome. This is Elongation factor Ts from Streptococcus sanguinis (strain SK36).